The sequence spans 503 residues: Probable cytosol aminopeptidase (503 aa).

Lys272 and Asp277 together coordinate Mn(2+). Lys284 is an active-site residue. Residues Asp295, Asp354, and Glu356 each coordinate Mn(2+). Residue Arg358 is part of the active site.

This sequence belongs to the peptidase M17 family. Mn(2+) is required as a cofactor.

The protein localises to the cytoplasm. The catalysed reaction is Release of an N-terminal amino acid, Xaa-|-Yaa-, in which Xaa is preferably Leu, but may be other amino acids including Pro although not Arg or Lys, and Yaa may be Pro. Amino acid amides and methyl esters are also readily hydrolyzed, but rates on arylamides are exceedingly low.. It catalyses the reaction Release of an N-terminal amino acid, preferentially leucine, but not glutamic or aspartic acids.. Presumably involved in the processing and regular turnover of intracellular proteins. Catalyzes the removal of unsubstituted N-terminal amino acids from various peptides. The chain is Probable cytosol aminopeptidase from Chlorobium limicola (strain DSM 245 / NBRC 103803 / 6330).